The following is a 238-amino-acid chain: Large ribosomal subunit protein bL17m (238 aa).

Belongs to the bacterial ribosomal protein bL17 family. Component of the mitochondrial large ribosomal subunit (mt-LSU). Mature yeast 74S mitochondrial ribosomes consist of a small (37S) and a large (54S) subunit. The 37S small subunit contains a 15S ribosomal RNA (15S mt-rRNA) and 34 different proteins. The 54S large subunit contains a 21S rRNA (21S mt-rRNA) and 46 different proteins.

It localises to the mitochondrion. Component of the mitochondrial ribosome (mitoribosome), a dedicated translation machinery responsible for the synthesis of mitochondrial genome-encoded proteins, including at least some of the essential transmembrane subunits of the mitochondrial respiratory chain. The mitoribosomes are attached to the mitochondrial inner membrane and translation products are cotranslationally integrated into the membrane. The sequence is that of Large ribosomal subunit protein bL17m (MRPL8) from Saccharomyces cerevisiae (strain ATCC 204508 / S288c) (Baker's yeast).